Reading from the N-terminus, the 449-residue chain is UDP-N-acetylmuramoylalanine--D-glutamate ligase (449 aa).

118-124 provides a ligand contact to ATP; it reads GTNGKTT.

It belongs to the MurCDEF family.

It localises to the cytoplasm. The enzyme catalyses UDP-N-acetyl-alpha-D-muramoyl-L-alanine + D-glutamate + ATP = UDP-N-acetyl-alpha-D-muramoyl-L-alanyl-D-glutamate + ADP + phosphate + H(+). It functions in the pathway cell wall biogenesis; peptidoglycan biosynthesis. Its function is as follows. Cell wall formation. Catalyzes the addition of glutamate to the nucleotide precursor UDP-N-acetylmuramoyl-L-alanine (UMA). This chain is UDP-N-acetylmuramoylalanine--D-glutamate ligase, found in Staphylococcus aureus (strain MRSA252).